The chain runs to 138 residues: Large ribosomal subunit protein bL17 (138 aa).

The protein belongs to the bacterial ribosomal protein bL17 family. Part of the 50S ribosomal subunit. Contacts protein L32.

The chain is Large ribosomal subunit protein bL17 from Phenylobacterium zucineum (strain HLK1).